A 791-amino-acid polypeptide reads, in one-letter code: Phenylalanine--tRNA ligase beta subunit (791 aa).

Residues 39–149 (GDEIQNVVTG…SDTAIGKDIK (111 aa)) enclose the tRNA-binding domain. A B5 domain is found at 403–478 (IKERNLKVDS…RIYGYNNIPT (76 aa)). 4 residues coordinate Mg(2+): D456, D462, E465, and E466. Positions 698–791 (PKFPAVDRDM…LENNLGAELR (94 aa)) constitute an FDX-ACB domain.

This sequence belongs to the phenylalanyl-tRNA synthetase beta subunit family. Type 1 subfamily. Tetramer of two alpha and two beta subunits. It depends on Mg(2+) as a cofactor.

The protein localises to the cytoplasm. The enzyme catalyses tRNA(Phe) + L-phenylalanine + ATP = L-phenylalanyl-tRNA(Phe) + AMP + diphosphate + H(+). The protein is Phenylalanine--tRNA ligase beta subunit of Clostridium tetani (strain Massachusetts / E88).